The primary structure comprises 380 residues: MSKKHTTLNASIIDTRRPTVAGADRHPGWHALRKIAARITTPLLPDDYLHLANPLWSARELRGRILGVRRETEDSATLFIKPGWGFSFDYQPGQYIGIGLLVDGRWRWRSYSLTSSPAASGSARMVTVTVKAMPEGFLSTHLVAGVKPGTIVRLAAPQGNFVLPDPAPPLILFLTAGSGITPVMSMLRTLVRRNQITDVVHLHSAPTAADVMFGAELAALAADHPGYRLSVRETRAQGRLDLTRIGQQVPDWRERQTWACGPEGVLNQADKVWSSAGASDRLHLERFAVSKTAPAGAGGTVTFARSGKSVAADAATSLMDAGEGAGVQLPFGCRMGICQSCVVDLVEGHVRDLRTGQRHEPGTRVQTCVSAASGDCVLDI.

An FAD-binding FR-type domain is found at 58 to 164 (ARELRGRILG…AAPQGNFVLP (107 aa)). The 2Fe-2S ferredoxin-type domain maps to 299–380 (GTVTFARSGK…AASGDCVLDI (82 aa)). [2Fe-2S] cluster contacts are provided by C333, C338, C341, and C368.

In terms of assembly, interacts with DesA3 to form a functional acyl-CoA desaturase complex. [2Fe-2S] cluster serves as cofactor. It depends on FAD as a cofactor.

The protein resides in the cell membrane. It functions in the pathway lipid metabolism; fatty acid metabolism. In terms of biological role, is likely involved in the aerobic desaturation system responsible for the synthesis of oleic acid from stearoyl-CoA; oleic acid is a precursor of mycobacterial membrane phospholipids and triglycerides. Is the electron transfer partner for the stearoyl-CoA 9-desaturase DesA3. Catalyzes electron transfer reaction between NADPH and the diiron center of DesA3. Cannot use NADH. In Mycobacterium tuberculosis (strain ATCC 25618 / H37Rv), this protein is NADPH oxidoreductase.